The primary structure comprises 225 residues: Ribosomal RNA large subunit methyltransferase E (225 aa).

Glycine 64, tryptophan 66, aspartate 93, aspartate 109, and aspartate 138 together coordinate S-adenosyl-L-methionine. The active-site Proton acceptor is lysine 178.

The protein belongs to the class I-like SAM-binding methyltransferase superfamily. RNA methyltransferase RlmE family.

Its subcellular location is the cytoplasm. It carries out the reaction uridine(2552) in 23S rRNA + S-adenosyl-L-methionine = 2'-O-methyluridine(2552) in 23S rRNA + S-adenosyl-L-homocysteine + H(+). Its function is as follows. Specifically methylates the uridine in position 2552 of 23S rRNA at the 2'-O position of the ribose in the fully assembled 50S ribosomal subunit. This Cupriavidus pinatubonensis (strain JMP 134 / LMG 1197) (Cupriavidus necator (strain JMP 134)) protein is Ribosomal RNA large subunit methyltransferase E.